Consider the following 302-residue polypeptide: Proteasome subunit beta (302 aa).

Positions 1–50 (MTITGSRGFPDGYLAPGSSFLDFAAQHAPTIMPGTQPTFDTIPQDIAPHG) are cleaved as a propeptide — removed in mature form; by autocatalysis. Threonine 51 functions as the Nucleophile in the catalytic mechanism. Residues 277-302 (EPGRDGPGNRLPSQGSATIIPESDQS) are disordered. The span at 287-302 (LPSQGSATIIPESDQS) shows a compositional bias: polar residues.

The protein belongs to the peptidase T1B family. As to quaternary structure, the 20S proteasome core is composed of 14 alpha and 14 beta subunits that assemble into four stacked heptameric rings, resulting in a barrel-shaped structure. The two inner rings, each composed of seven catalytic beta subunits, are sandwiched by two outer rings, each composed of seven alpha subunits. The catalytic chamber with the active sites is on the inside of the barrel. Has a gated structure, the ends of the cylinder being occluded by the N-termini of the alpha-subunits. Is capped by the proteasome-associated ATPase, ARC.

The protein localises to the cytoplasm. The enzyme catalyses Cleavage of peptide bonds with very broad specificity.. Its pathway is protein degradation; proteasomal Pup-dependent pathway. The formation of the proteasomal ATPase ARC-20S proteasome complex, likely via the docking of the C-termini of ARC into the intersubunit pockets in the alpha-rings, may trigger opening of the gate for substrate entry. Interconversion between the open-gate and close-gate conformations leads to a dynamic regulation of the 20S proteasome proteolysis activity. In terms of biological role, component of the proteasome core, a large protease complex with broad specificity involved in protein degradation. This chain is Proteasome subunit beta, found in Jonesia denitrificans (strain ATCC 14870 / DSM 20603 / BCRC 15368 / CIP 55.134 / JCM 11481 / NBRC 15587 / NCTC 10816 / Prevot 55134) (Listeria denitrificans).